Reading from the N-terminus, the 315-residue chain is GTP cyclohydrolase MptA 1 (315 aa).

Belongs to the GTP cyclohydrolase IV family. As to quaternary structure, homodimer. Requires Fe(2+) as cofactor.

It catalyses the reaction GTP + H2O = 7,8-dihydroneopterin 2',3'-cyclic phosphate + formate + diphosphate + H(+). It participates in cofactor biosynthesis; 5,6,7,8-tetrahydromethanopterin biosynthesis. Converts GTP to 7,8-dihydro-D-neopterin 2',3'-cyclic phosphate, the first intermediate in the biosynthesis of coenzyme methanopterin. This chain is GTP cyclohydrolase MptA 1, found in Methanocella arvoryzae (strain DSM 22066 / NBRC 105507 / MRE50).